Here is a 241-residue protein sequence, read N- to C-terminus: Small ribosomal subunit protein uS2 (241 aa).

The protein belongs to the universal ribosomal protein uS2 family.

This is Small ribosomal subunit protein uS2 from Erwinia tasmaniensis (strain DSM 17950 / CFBP 7177 / CIP 109463 / NCPPB 4357 / Et1/99).